The chain runs to 299 residues: Hairy/enhancer-of-split related with YRPW motif protein 1 (299 aa).

The tract at residues 1 to 53 (MKRAHPDYSSSDSELDETIEVEKESADENGNLSSALCSMSPTTSSQVLARKRR) is disordered. A compositionally biased stretch (polar residues) spans 28 to 47 (ENGNLSSALCSMSPTTSSQV). The segment at 48–117 (LARKRRRGII…GGKGYFDAHA (70 aa)) is transcriptional repression and interaction with NCOR1 and SIN3A. A bHLH domain is found at 49 to 104 (ARKRRRGIIEKRRRDRINNSLSELRRLVPSAFEKQGSAKLEKAEILQMTVDHLKML). An Orange domain is found at 122–158 (YRSLGFRECLAEVARYLSIIEGLDASDPLLVRLVSHL). The disordered stretch occupies residues 194–234 (LLLPQNGHGNAGTAASPTEPHHQGRLASAHPEAPALRAPPS). The YRPW motif signature appears at 289-292 (YRPW).

Belongs to the HEY family. As to quaternary structure, may self-associate. Interacts with HES1, NCOR1 and SIN3A. Interacts with GATA4, GATA6 and HDAC1 and HEYL. Interacts with CCDC89/BOIP. As to expression, expressed in somitic mesoderm, brain, central nervous system, kidney, heart, nasal epithelium, limbs, lung, muscle, ovary and testis.

It is found in the nucleus. Its function is as follows. Transcriptional repressor which binds preferentially to the canonical E box sequence 5'-CACGTG-3'. Downstream effector of Notch signaling required for cardiovascular development. Specifically required for the Notch-induced endocardial epithelial to mesenchymal transition, which is itself criticial for cardiac valve and septum development. May be required in conjunction with HEY2 to specify arterial cell fate or identity. Promotes maintenance of neuronal precursor cells and glial versus neuronal fate specification. Represses transcription by the cardiac transcriptional activators GATA4 and GATA6 and by the neuronal bHLH factors ASCL1/MASH1 and NEUROD4/MATH3. The chain is Hairy/enhancer-of-split related with YRPW motif protein 1 (Hey1) from Mus musculus (Mouse).